We begin with the raw amino-acid sequence, 202 residues long: Transcriptional regulator GfcR 2 (202 aa).

It belongs to the purine/pyrimidine phosphoribosyltransferase family. GfcR subfamily.

The sequence is that of Transcriptional regulator GfcR 2 from Methanosarcina barkeri (strain Fusaro / DSM 804).